The chain runs to 297 residues: MKESLPITLRPNEPMSRHTSWRVGGPAQYYAEPTTPDEAMVLAAWAMTHRLPLIWVGRGTNLLVRDEGFAGVIASYRGQRWALHEHGETAELWVEAGTPMAGTARRLAAMGWAGLEWAEGLPGAIGGAIVGNAGCYGGDTASVLIDAELLLNGSERVVWPVTELGYAYRESILKRPGADGVPPLVLAGRFRLHRADPKVLMARIGAIAAERKRKTPAGSSCGSVFKNPPGDSAGRLIEAAGLKGTRVGDAEISPIHANYIVNRGQARAADILTLIELARTTVAEQFGVMLQLEVRVI.

Positions 22-195 (RVGGPAQYYA…LAGRFRLHRA (174 aa)) constitute an FAD-binding PCMH-type domain. R169 is a catalytic residue. Residue S223 is the Proton donor of the active site. The active site involves E293.

The protein belongs to the MurB family. It depends on FAD as a cofactor.

It is found in the cytoplasm. The catalysed reaction is UDP-N-acetyl-alpha-D-muramate + NADP(+) = UDP-N-acetyl-3-O-(1-carboxyvinyl)-alpha-D-glucosamine + NADPH + H(+). The protein operates within cell wall biogenesis; peptidoglycan biosynthesis. Cell wall formation. The chain is UDP-N-acetylenolpyruvoylglucosamine reductase from Chloroflexus aggregans (strain MD-66 / DSM 9485).